Consider the following 393-residue polypeptide: S-adenosylmethionine synthase 2 (393 aa).

Glu9 contributes to the Mg(2+) binding site. His15 is a binding site for ATP. Glu43 contributes to the K(+) binding site. 2 residues coordinate L-methionine: Glu56 and Gln99. Residues 167–169 (DGK), 235–238 (SGRF), Asp246, 252–253 (RK), Ala269, Lys273, and Lys277 each bind ATP. Asp246 serves as a coordination point for L-methionine. Lys277 provides a ligand contact to L-methionine.

This sequence belongs to the AdoMet synthase family. Homotetramer. Requires Mn(2+) as cofactor. Mg(2+) is required as a cofactor. It depends on Co(2+) as a cofactor. K(+) serves as cofactor. In terms of tissue distribution, roots and shoots.

Its subcellular location is the cytoplasm. The enzyme catalyses L-methionine + ATP + H2O = S-adenosyl-L-methionine + phosphate + diphosphate. It functions in the pathway amino-acid biosynthesis; S-adenosyl-L-methionine biosynthesis; S-adenosyl-L-methionine from L-methionine: step 1/1. Its function is as follows. Catalyzes the formation of S-adenosylmethionine from methionine and ATP. The reaction comprises two steps that are both catalyzed by the same enzyme: formation of S-adenosylmethionine (AdoMet) and triphosphate, and subsequent hydrolysis of the triphosphate. The sequence is that of S-adenosylmethionine synthase 2 (SAMS2) from Pinus contorta (Shore pine).